Consider the following 96-residue polypeptide: Small ribosomal subunit protein uS19 (96 aa).

The interval 1-30 (MARSIKKGPFADKHLTKKVEDANKGNKKSV) is disordered. Over residues 9-24 (PFADKHLTKKVEDANK) the composition is skewed to basic and acidic residues.

The protein belongs to the universal ribosomal protein uS19 family.

In terms of biological role, protein S19 forms a complex with S13 that binds strongly to the 16S ribosomal RNA. This Anaeromyxobacter sp. (strain Fw109-5) protein is Small ribosomal subunit protein uS19.